Reading from the N-terminus, the 103-residue chain is Small ribosomal subunit protein uS10 (103 aa).

Belongs to the universal ribosomal protein uS10 family. Part of the 30S ribosomal subunit.

In terms of biological role, involved in the binding of tRNA to the ribosomes. The polypeptide is Small ribosomal subunit protein uS10 (Syntrophobacter fumaroxidans (strain DSM 10017 / MPOB)).